The sequence spans 278 residues: Digeranylgeranylglyceryl phosphate synthase (278 aa).

7 helical membrane-spanning segments follow: residues Leu-12–Phe-32, Ile-34–Gly-54, Leu-91–Val-111, Val-142–Cys-162, Phe-204–Ile-224, Tyr-226–Met-246, and Ser-257–Phe-277.

Belongs to the UbiA prenyltransferase family. DGGGP synthase subfamily. It depends on Mg(2+) as a cofactor.

The protein localises to the cell membrane. It carries out the reaction sn-3-O-(geranylgeranyl)glycerol 1-phosphate + (2E,6E,10E)-geranylgeranyl diphosphate = 2,3-bis-O-(geranylgeranyl)-sn-glycerol 1-phosphate + diphosphate. The protein operates within membrane lipid metabolism; glycerophospholipid metabolism. In terms of biological role, prenyltransferase that catalyzes the transfer of the geranylgeranyl moiety of geranylgeranyl diphosphate (GGPP) to the C2 hydroxyl of (S)-3-O-geranylgeranylglyceryl phosphate (GGGP). This reaction is the second ether-bond-formation step in the biosynthesis of archaeal membrane lipids. The protein is Digeranylgeranylglyceryl phosphate synthase of Methanococcus maripaludis (strain C6 / ATCC BAA-1332).